The primary structure comprises 176 residues: ATP-dependent protease subunit HslV (176 aa).

Residue threonine 2 is part of the active site. Positions 158, 161, and 164 each coordinate Na(+).

Belongs to the peptidase T1B family. HslV subfamily. A double ring-shaped homohexamer of HslV is capped on each side by a ring-shaped HslU homohexamer. The assembly of the HslU/HslV complex is dependent on binding of ATP.

The protein localises to the cytoplasm. It carries out the reaction ATP-dependent cleavage of peptide bonds with broad specificity.. With respect to regulation, allosterically activated by HslU binding. Protease subunit of a proteasome-like degradation complex believed to be a general protein degrading machinery. This chain is ATP-dependent protease subunit HslV, found in Pasteurella multocida (strain Pm70).